The chain runs to 194 residues: 7-methyl-GTP pyrophosphatase (194 aa).

The active-site Proton acceptor is the aspartate 69.

Belongs to the Maf family. YceF subfamily. A divalent metal cation is required as a cofactor.

The protein resides in the cytoplasm. It catalyses the reaction N(7)-methyl-GTP + H2O = N(7)-methyl-GMP + diphosphate + H(+). In terms of biological role, nucleoside triphosphate pyrophosphatase that hydrolyzes 7-methyl-GTP (m(7)GTP). May have a dual role in cell division arrest and in preventing the incorporation of modified nucleotides into cellular nucleic acids. This is 7-methyl-GTP pyrophosphatase (yceF1) from Salmonella choleraesuis (strain SC-B67).